A 112-amino-acid chain; its full sequence is T cell receptor alpha variable 30 (112 aa).

The N-terminal stretch at 1–21 is a signal peptide; that stretch reads METLLKVLSGTLLWQLTWVRS. The region spanning 24–112 is the Ig-like domain; that stretch reads PVQSPQAVIL…YSGTYFCGTE (89 aa). Residue N42 is glycosylated (N-linked (GlcNAc...) asparagine). C43 and C109 are joined by a disulfide.

Alpha-beta TR is a heterodimer composed of an alpha and beta chain; disulfide-linked. The alpha-beta TR is associated with the transmembrane signaling CD3 coreceptor proteins to form the TR-CD3 (TcR or TCR). The assembly of alpha-beta TR heterodimers with CD3 occurs in the endoplasmic reticulum where a single alpha-beta TR heterodimer associates with one CD3D-CD3E heterodimer, one CD3G-CD3E heterodimer and one CD247 homodimer forming a stable octameric structure. CD3D-CD3E and CD3G-CD3E heterodimers preferentially associate with TR alpha and TR beta chains, respectively. The association of the CD247 homodimer is the last step of TcR assembly in the endoplasmic reticulum and is required for transport to the cell surface.

The protein localises to the cell membrane. Functionally, v region of the variable domain of T cell receptor (TR) alpha chain that participates in the antigen recognition. Alpha-beta T cell receptors are antigen specific receptors which are essential to the immune response and are present on the cell surface of T lymphocytes. Recognize peptide-major histocompatibility (MH) (pMH) complexes that are displayed by antigen presenting cells (APC), a prerequisite for efficient T cell adaptive immunity against pathogens. Binding of alpha-beta TR to pMH complex initiates TR-CD3 clustering on the cell surface and intracellular activation of LCK that phosphorylates the ITAM motifs of CD3G, CD3D, CD3E and CD247 enabling the recruitment of ZAP70. In turn ZAP70 phosphorylates LAT, which recruits numerous signaling molecules to form the LAT signalosome. The LAT signalosome propagates signal branching to three major signaling pathways, the calcium, the mitogen-activated protein kinase (MAPK) kinase and the nuclear factor NF-kappa-B (NF-kB) pathways, leading to the mobilization of transcription factors that are critical for gene expression and essential for T cell growth and differentiation. The T cell repertoire is generated in the thymus, by V-(D)-J rearrangement. This repertoire is then shaped by intrathymic selection events to generate a peripheral T cell pool of self-MH restricted, non-autoaggressive T cells. Post-thymic interaction of alpha-beta TR with the pMH complexes shapes TR structural and functional avidity. The polypeptide is T cell receptor alpha variable 30 (Homo sapiens (Human)).